The sequence spans 299 residues: MSRDLPNVIILIGPTASGKTELAIEIAEYFKTHIHNIDSRQIYKSMDIGTAKPSKNQQKKIKHFLIDIEEPIHPINVKQFQGIAQKSIKSEIKQNNLPFLVGGSGLYMNSITKGFFVPDVPPQNDLRKQLEELGQKKCWDLLKNCDPLSTKKINFADHIRTIRALEVFYVTGKPLSTLKVQRAPDWRILELGLDRDNLKERILQRTKNMFSAGIIEETNYLISKYGFDLPILETIGYREAKDVLKNHSTIDKAIELTTTKTIQYAKRQKTWFRNKNNPLWLDNKNLLKDAIIKIESFLS.

13–20 (GPTASGKT) lines the ATP pocket. A substrate-binding site is contributed by 15-20 (TASGKT). Residues 38–41 (DSRQ) form an interaction with substrate tRNA region.

This sequence belongs to the IPP transferase family. Monomer. The cofactor is Mg(2+).

It carries out the reaction adenosine(37) in tRNA + dimethylallyl diphosphate = N(6)-dimethylallyladenosine(37) in tRNA + diphosphate. In terms of biological role, catalyzes the transfer of a dimethylallyl group onto the adenine at position 37 in tRNAs that read codons beginning with uridine, leading to the formation of N6-(dimethylallyl)adenosine (i(6)A). This chain is tRNA dimethylallyltransferase, found in Prochlorococcus marinus (strain AS9601).